Here is a 135-residue protein sequence, read N- to C-terminus: Beta/delta-urticatoxin-Ui2a (135 aa).

The signal sequence occupies residues 1–18 (MGAIVLVAIMALVASSSA). The propeptide occupies 19 to 72 (FSDDEQNMMNAEGEKGIRSYSAADDVSDMIESLFVNSGNRNLVLMMLSGRPQPN). Disulfide bonds link C75–C92, C82–C97, C91–C105, C107–C121, C114–C126, and C120–C134.

This sequence belongs to the urticatoxin-2 family. In terms of tissue distribution, expressed in trichomes, that are stiff epidermal hairs located on the surface of petioles and leaves.

The protein localises to the secreted. Functionally, plant defense neurotoxin that causes pain and systemic symptoms in mammals via modulation of voltage-gated sodium channels (Nav). Potent modulator of human Nav1.5/SCN5A (EC(50)=55 nM), Nav1.6/SCN8A (EC(50)=0.86 nM), and Nav1.7/SCN9A (EC(50)=208 nM), where it shifts the activation threshold to more negative potentials and delays fast inactivation. Also shifts the voltage-dependence of steady-state fast inactivation of Nav1.6/SCN8A, but not that of Nav1.5/SCN5A or Nav1.7/SCN9A. On Nav1.7/SCN9A, principally acts by binding to extracellular loops of domain IV (Nav site 3). In vivo, intraplantar injection into mice causes numerous dose-dependent, immediate, and long-lasting spontaneous pain behaviors, while no swelling is observed in the injected paw. At the highest doses tested, systemic symptoms including hypokinesia and hypersalivation are observed. This is Beta/delta-urticatoxin-Ui2a from Urtica incisa (Scrub nettle).